A 292-amino-acid chain; its full sequence is Aquaporin-3 (292 aa).

Over M1–Q24 the chain is Cytoplasmic. The chain crosses the membrane as a helical span at residues A25–S42. Over V43–F56 the chain is Extracellular. Residues L57–A74 traverse the membrane as a helical segment. Over G75–S78 the chain is Cytoplasmic. Residues G79–F92 constitute an intramembrane region (discontinuously helical). Residues N83–A85 carry the NPA 1 motif. At L93–K100 the chain is on the cytoplasmic side. A helical transmembrane segment spans residues L101 to G121. Residues L122–N159 are Extracellular-facing. N141 is a glycosylation site (N-linked (GlcNAc...) asparagine). The chain crosses the membrane as a helical span at residues G160 to A177. At I178 to G189 the chain is on the cytoplasmic side. The chain crosses the membrane as a helical span at residues L190–M206. Topologically, residues G207–S210 are extracellular. The discontinuously helical intramembrane region spans G211 to L224. Residues N215 to A217 carry the NPA 2 motif. The Extracellular segment spans residues F225–W242. Residues W243–M264 form a helical membrane-spanning segment. Residues I265–I292 lie on the Cytoplasmic side of the membrane.

Belongs to the MIP/aquaporin (TC 1.A.8) family. Homotetramer; each monomer provides an independent glycerol/water pore. Could also exist in other oligomeric states. As to expression, detected in kidney medulla and papilla, in collecting duct cells. Detected in colon.

The protein resides in the cell membrane. It localises to the basolateral cell membrane. The enzyme catalyses glycerol(in) = glycerol(out). It catalyses the reaction H2O(in) = H2O(out). It carries out the reaction urea(in) = urea(out). The catalysed reaction is H2O2(out) = H2O2(in). Its activity is regulated as follows. Channel activity is inhibited by mercury ions. Functionally, aquaglyceroporins form homotetrameric transmembrane channels, with each monomer independently mediating glycerol and water transport across the plasma membrane along their osmotic gradient. Could also be permeable to urea. Also participates in cell permeability to H2O2 and H2O2-mediated signaling. In skin, transports glycerol to the epidermis and stratum corneum, where it maintains hydration, elasticity, and supports lipid biosynthesis for barrier repair. In kidney, contributes to the reabsorption of water, helping the body maintain proper fluid balance. The polypeptide is Aquaporin-3 (Rattus norvegicus (Rat)).